The sequence spans 177 residues: uncharacterized protein (177 aa).

Composition is skewed to low complexity over residues 78–93 (NNNNNNNNTINNNTNN) and 120–130 (SDVNSNNNNGN). Residues 78–146 (NNNNNNNNTI…NKKLKKDGTN (69 aa)) are disordered. Over residues 131–146 (HQKKKINKKLKKDGTN) the composition is skewed to basic residues.

This is an uncharacterized protein from Dictyostelium discoideum (Social amoeba).